The primary structure comprises 382 residues: Histone acetyltransferase type B subunit 2 (382 aa).

5 WD repeats span residues 98–138, 141–181, 184–224, 228–268, and 275–315; these read ENNA…RYSH, PHTK…TTFK, IQKD…VVSQ, ESSN…ENSG, and GHSE…EEQQ. The interaction with the histone H4 N-terminus stretch occupies residues 317 to 321; the sequence is EDAED. The WD 6 repeat unit spans residues 332–372; it reads GHTAGVSDLSWCPFKDWMIGSVADDNIVHLWEISKKLITNE.

Belongs to the WD repeat RBAP46/RBAP48/MSI1 family. Component of the HAT-B complex composed of at least HAT1 and HAT2. The HAT-B complex binds to histone H4 tail.

It is found in the cytoplasm. Its subcellular location is the nucleus. Regulatory subunit of the histone acetylase B (HAT-B) complex. The complex acetylates 'Lys-14' of histone H4 which is required for telomeric silencing. The sequence is that of Histone acetyltransferase type B subunit 2 (HAT2) from Candida albicans (strain SC5314 / ATCC MYA-2876) (Yeast).